A 96-amino-acid chain; its full sequence is Large ribosomal subunit protein eL14 (96 aa).

Belongs to the eukaryotic ribosomal protein eL14 family.

In Desulfurococcus amylolyticus (strain DSM 18924 / JCM 16383 / VKM B-2413 / 1221n) (Desulfurococcus kamchatkensis), this protein is Large ribosomal subunit protein eL14.